The primary structure comprises 639 residues: tRNA 5-methylaminomethyl-2-thiouridine biosynthesis bifunctional protein MnmC (639 aa).

The tRNA (mnm(5)s(2)U34)-methyltransferase stretch occupies residues 1–228; sequence MSEPIEWLED…KRDNLQATYA (228 aa). The segment at 254–639 is FAD-dependent cmnm(5)s(2)U34 oxidoreductase; that stretch reads VGAGLAGAAV…SERWLGYEPQ (386 aa).

In the N-terminal section; belongs to the methyltransferase superfamily. tRNA (mnm(5)s(2)U34)-methyltransferase family. The protein in the C-terminal section; belongs to the DAO family. FAD is required as a cofactor.

The protein localises to the cytoplasm. It carries out the reaction 5-aminomethyl-2-thiouridine(34) in tRNA + S-adenosyl-L-methionine = 5-methylaminomethyl-2-thiouridine(34) in tRNA + S-adenosyl-L-homocysteine + H(+). In terms of biological role, catalyzes the last two steps in the biosynthesis of 5-methylaminomethyl-2-thiouridine (mnm(5)s(2)U) at the wobble position (U34) in tRNA. Catalyzes the FAD-dependent demodification of cmnm(5)s(2)U34 to nm(5)s(2)U34, followed by the transfer of a methyl group from S-adenosyl-L-methionine to nm(5)s(2)U34, to form mnm(5)s(2)U34. This Acidovorax sp. (strain JS42) protein is tRNA 5-methylaminomethyl-2-thiouridine biosynthesis bifunctional protein MnmC.